Here is a 220-residue protein sequence, read N- to C-terminus: Fructose-6-phosphate aldolase (220 aa).

Lys-85 (schiff-base intermediate with substrate) is an active-site residue.

The protein belongs to the transaldolase family. Type 3A subfamily. In terms of assembly, homodecamer.

It is found in the cytoplasm. It catalyses the reaction beta-D-fructose 6-phosphate = dihydroxyacetone + D-glyceraldehyde 3-phosphate. In terms of biological role, catalyzes the reversible formation of fructose 6-phosphate from dihydroxyacetone and D-glyceraldehyde 3-phosphate via an aldolization reaction. The chain is Fructose-6-phosphate aldolase from Salmonella arizonae (strain ATCC BAA-731 / CDC346-86 / RSK2980).